A 511-amino-acid polypeptide reads, in one-letter code: Glutamate/gamma-aminobutyrate antiporter (511 aa).

Over 1–14 (MATLVQTGKAKQLT) the chain is Cytoplasmic. A helical transmembrane segment spans residues 15–35 (LLGFFAITASMVMAVYEYPTF). Residues 36–41 (ATSGFS) lie on the Periplasmic side of the membrane. The helical transmembrane segment at 42–62 (LVFFLLLGGILWFIPVGLCAA) threads the bilayer. Over 63-93 (EMATVDGWEEGGVFAWVSNTLGPRWGFAAIS) the chain is Cytoplasmic. Residues 94–114 (FGYLQIAIGFIPMLYFVLGAL) traverse the membrane as a helical segment. Residues 115 to 127 (SYILKWPALNEDP) are Periplasmic-facing. Residues 128–148 (ITKTIAALIILWALALTQFGG) traverse the membrane as a helical segment. Topologically, residues 149–157 (TKYTARIAK) are cytoplasmic. A helical membrane pass occupies residues 158 to 178 (VGFFAGILLPAFILIALAAIY). Residues 179-200 (LHSGAPVAIEMDSKTFFPDFSK) lie on the Periplasmic side of the membrane. A helical membrane pass occupies residues 201–221 (VGTLVVFVAFILSYMGVEASA). The Cytoplasmic portion of the chain corresponds to 222-239 (THVNEMSNPGRDYPLAML). The helical transmembrane segment at 240–260 (LLMVAAICLSSVGGLSIAMVI) threads the bilayer. Residues 261–291 (PGNEINLSAGVMQTFTVLMSHVAPEIEWTVR) lie on the Periplasmic side of the membrane. The chain crosses the membrane as a helical span at residues 292–312 (VISALLLLGVLAEIASWIVGP). Residues 313 to 335 (SRGMYVTAQKNLLPAAFAKMNKN) are Cytoplasmic-facing. Residues 336-356 (GVPVTLVISQLVITSIALIIL) form a helical membrane-spanning segment. The Periplasmic portion of the chain corresponds to 357-366 (TNTGGGNNMS). A helical membrane pass occupies residues 367–387 (FLIALALTVVIYLCAYFMLFI). The Cytoplasmic segment spans residues 388–412 (GYIVLVLKHPDLKRTFNIPGGKGVK). Residues 413–433 (LVVAIVGLLTSIMAFIVSFLP) traverse the membrane as a helical segment. Residues 434–445 (PDNIQGDSTDMY) are Periplasmic-facing. A helical membrane pass occupies residues 446 to 466 (VELLVVSFLVVLALPFILYAV). Over 467–511 (HDRKGKANTGVTLEPINSQNAPKGHFFLHPRARSPHYIVMNDKKH) the chain is Cytoplasmic.

It belongs to the amino acid-polyamine-organocation (APC) superfamily. Glutamate:GABA antiporter (GGA) (TC 2.A.3.7) family.

It is found in the cell inner membrane. It catalyses the reaction 4-aminobutanoate(in) + L-glutamate(out) = 4-aminobutanoate(out) + L-glutamate(in). With respect to regulation, shows pH-dependent activity. The glutamate analog L-trans-pyrrolidine-2,4-dicarboxylic acid (L-PDC) blocks the uptake of glutamate by selective inhibition. Its function is as follows. Involved in glutaminase-dependent acid resistance. Exchanges extracellular glutamate (Glu) for intracellular gamma-aminobutyric acid (GABA) under acidic conditions. The ability to survive the extremely acidic conditions of the stomach is essential for successful colonization of the host by commensal and pathogenic bacteria. The protein is Glutamate/gamma-aminobutyrate antiporter (gadC) of Escherichia coli O157:H7.